The chain runs to 132 residues: Large ribosomal subunit protein bL12 (132 aa).

The protein belongs to the bacterial ribosomal protein bL12 family. Homodimer. Part of the ribosomal stalk of the 50S ribosomal subunit. Forms a multimeric L10(L12)X complex, where L10 forms an elongated spine to which 2 to 4 L12 dimers bind in a sequential fashion. Binds GTP-bound translation factors.

Functionally, forms part of the ribosomal stalk which helps the ribosome interact with GTP-bound translation factors. Is thus essential for accurate translation. In Ehrlichia canis (strain Jake), this protein is Large ribosomal subunit protein bL12.